Consider the following 575-residue polypeptide: Dihydroxy-acid dehydratase (575 aa).

The interval 1 to 25 (MPTTDSARAADIKQPDIKPRSRDVT) is disordered. Residues 8–25 (RAADIKQPDIKPRSRDVT) show a composition bias toward basic and acidic residues. Cys-64 lines the [2Fe-2S] cluster pocket. A Mg(2+)-binding site is contributed by Asp-96. A [2Fe-2S] cluster-binding site is contributed by Cys-137. Positions 138 and 139 each coordinate Mg(2+). Residue Lys-139 is modified to N6-carboxylysine. Cys-214 is a [2Fe-2S] cluster binding site. Glu-465 provides a ligand contact to Mg(2+). Ser-491 acts as the Proton acceptor in catalysis.

The protein belongs to the IlvD/Edd family. In terms of assembly, homodimer. [2Fe-2S] cluster is required as a cofactor. Mg(2+) serves as cofactor.

The enzyme catalyses (2R)-2,3-dihydroxy-3-methylbutanoate = 3-methyl-2-oxobutanoate + H2O. The catalysed reaction is (2R,3R)-2,3-dihydroxy-3-methylpentanoate = (S)-3-methyl-2-oxopentanoate + H2O. It participates in amino-acid biosynthesis; L-isoleucine biosynthesis; L-isoleucine from 2-oxobutanoate: step 3/4. It functions in the pathway amino-acid biosynthesis; L-valine biosynthesis; L-valine from pyruvate: step 3/4. Functionally, functions in the biosynthesis of branched-chain amino acids. Catalyzes the dehydration of (2R,3R)-2,3-dihydroxy-3-methylpentanoate (2,3-dihydroxy-3-methylvalerate) into 2-oxo-3-methylpentanoate (2-oxo-3-methylvalerate) and of (2R)-2,3-dihydroxy-3-methylbutanoate (2,3-dihydroxyisovalerate) into 2-oxo-3-methylbutanoate (2-oxoisovalerate), the penultimate precursor to L-isoleucine and L-valine, respectively. The polypeptide is Dihydroxy-acid dehydratase (Mycobacterium avium (strain 104)).